Consider the following 107-residue polypeptide: Large ribosomal subunit protein uL24 (107 aa).

Belongs to the universal ribosomal protein uL24 family. Part of the 50S ribosomal subunit.

Functionally, one of two assembly initiator proteins, it binds directly to the 5'-end of the 23S rRNA, where it nucleates assembly of the 50S subunit. In terms of biological role, one of the proteins that surrounds the polypeptide exit tunnel on the outside of the subunit. The chain is Large ribosomal subunit protein uL24 from Thermotoga neapolitana (strain ATCC 49049 / DSM 4359 / NBRC 107923 / NS-E).